The chain runs to 1148 residues: Signal transducer and activator of transcription B (1148 aa).

Residues 1–36 (MEVTNNGSNNSSTIASTNPPTSPSTTSTSKSLPPLS) show a composition bias toward low complexity. 5 disordered regions span residues 1 to 81 (MEVT…NNNN), 93 to 178 (SSSN…LSSS), 268 to 312 (NTNN…PSNG), 403 to 425 (KNNI…NSLL), and 453 to 645 (YDYN…KTVT). Polar residues predominate over residues 37-47 (FLNSQWENKQS). 3 stretches are compositionally biased toward low complexity: residues 48–81 (NNNN…NNNN), 106–178 (NNNN…LSSS), and 268–298 (NTNN…NNNN). Positions 466–517 (SNSSNNNSSNNNSNNNNNNNSNNNNNIIGSISPPHSSQLQQVSSPQQQQQQQ) are enriched in low complexity. Over residues 525-541 (SISSGSIKDLINSPNKE) the composition is skewed to polar residues. Over residues 544 to 557 (SKSQYPSSLSQSSS) the composition is skewed to low complexity. Acidic residues predominate over residues 561 to 572 (MDTDVDSTDEFD). The segment covering 574–610 (GSNSNNNNNNNNNNNNNNNSNNSNNKKRNNSNNNNLG) has biased composition (low complexity). Positions 997-1122 (WQNGFIFMFL…TIPVFKREPK (126 aa)) constitute an SH2 domain.

Belongs to the transcription factor STAT family. Homodimer. Does not form heterodimers with other family members.

The protein localises to the nucleus. Transcription factor that regulates gene expression during development. Required for optimal cell growth. The protein is Signal transducer and activator of transcription B (dstB) of Dictyostelium discoideum (Social amoeba).